A 167-amino-acid polypeptide reads, in one-letter code: Large ribosomal subunit protein uL23 (167 aa).

Positions 1–130 are large ribosomal subunit protein uL23; sequence MNVNEIIKGP…ELEAKNKEIA (130 aa). 2 disordered regions span residues 91-112 and 137-167; these read FEDE…TDEK and QAEL…NSAK. Basic and acidic residues-rich tracts occupy residues 97-112 and 137-157; these read QDQK…TDEK and QAEL…KIEN. Residues 131 to 167 form a unknown region; the sequence is EKLAKKQAELAKKESETNENQEKKIENQTENQENSAK. Polar residues predominate over residues 158–167; the sequence is QTENQENSAK.

It belongs to the universal ribosomal protein uL23 family. Part of the 50S ribosomal subunit. Contacts protein L29, and trigger factor when it is bound to the ribosome.

In terms of biological role, one of the early assembly proteins it binds 23S rRNA. One of the proteins that surrounds the polypeptide exit tunnel on the outside of the ribosome. Forms the main docking site for trigger factor binding to the ribosome. This Mesomycoplasma hyopneumoniae (strain 7448) (Mycoplasma hyopneumoniae) protein is Large ribosomal subunit protein uL23.